We begin with the raw amino-acid sequence, 508 residues long: Photosystem II CP47 reaction center protein (508 aa).

The next 6 membrane-spanning stretches (helical) occupy residues 21-36, 101-115, 140-156, 203-218, 237-252, and 457-472; these read SVHI…WAGS, IVFS…IWHW, GIHL…FGAF, IAAG…FHLS, VLSS…AFVV, and SFAL…HGAR.

Belongs to the PsbB/PsbC family. PsbB subfamily. PSII is composed of 1 copy each of membrane proteins PsbA, PsbB, PsbC, PsbD, PsbE, PsbF, PsbH, PsbI, PsbJ, PsbK, PsbL, PsbM, PsbT, PsbX, PsbY, PsbZ, Psb30/Ycf12, at least 3 peripheral proteins of the oxygen-evolving complex and a large number of cofactors. It forms dimeric complexes. Binds multiple chlorophylls. PSII binds additional chlorophylls, carotenoids and specific lipids. is required as a cofactor.

It localises to the plastid. Its subcellular location is the chloroplast thylakoid membrane. In terms of biological role, one of the components of the core complex of photosystem II (PSII). It binds chlorophyll and helps catalyze the primary light-induced photochemical processes of PSII. PSII is a light-driven water:plastoquinone oxidoreductase, using light energy to abstract electrons from H(2)O, generating O(2) and a proton gradient subsequently used for ATP formation. This chain is Photosystem II CP47 reaction center protein, found in Ipomoea purpurea (Common morning glory).